A 208-amino-acid polypeptide reads, in one-letter code: uncharacterized protein (208 aa).

Over residues 118-134 the composition is skewed to low complexity; that stretch reads QYPNQYQQQPQQQQPGY. Residues 118–208 are disordered; sequence QYPNQYQQQP…HKKEKNEIKE (91 aa). The segment covering 138 to 175 has biased composition (polar residues); the sequence is NYNQPPVQLNKQAYDNYQQNDYKSNNQPNLAKENNISN. The span at 187 to 201 shows a compositional bias: basic residues; the sequence is KKEKKHSFFSKLHKK.

This is an uncharacterized protein from Dictyostelium discoideum (Social amoeba).